Here is a 526-residue protein sequence, read N- to C-terminus: Arginine/ornithine antiporter ArcD1 (526 aa).

Transmembrane regions (helical) follow at residues 8 to 28 (GIGLAALVAIIVSGAIGGGVF), 41 to 61 (GGVVISWIVIGFGILMLVLSL), 88 to 108 (FISGWGYWLSAWAGNIAFAVL), 128 to 148 (LTILSVIVVSIVSWGLTLLVM), 160 to 180 (IVLVAKLIPLFVFVIAGIVTF), 220 to 240 (VKGSLMVMIWVFVGIEGAAMM), 255 to 275 (IFGLIALLVIYILLSLLPFGF), 297 to 317 (VGGWGGSLMAIGLVISLLGAW), 354 to 374 (LLLTQLIVQIFLIVTYFVADA), 378 to 398 (FVYLCTAVIMICYALVGLYLF), 407 to 427 (TSNIIIGFIAAAFQILALYYS), 428 to 448 (GWQFVWLSLILYAVGFILYAL), 466 to 486 (FILTVLGILAVFGVYGNWLGL), and 495 to 515 (NTLLVAVVPLIVVTFIVYFVV).

The protein belongs to the amino acid-polyamine-organocation (APC) superfamily. Basic amino acid/polyamine antiporter (APA) (TC 2.A.3.2) family.

It localises to the cell membrane. It carries out the reaction L-ornithine(in) + L-arginine(out) = L-ornithine(out) + L-arginine(in). Catalyzes electroneutral exchange between L-arginine and L-ornithine. Can also efficiently translocate L-histidine and L-lysine. ArcD1 is the main L-arginine/L-ornithine exchanger in the arginine deiminase (ADI) pathway. The chain is Arginine/ornithine antiporter ArcD1 from Lactococcus lactis subsp. cremoris (strain MG1363).